The sequence spans 128 residues: Insulin-like 3 (128 aa).

Positions 1-15 are cleaved as a signal peptide; it reads MHALLLLLLLALGSA. 3 disulfide bridges follow: Cys-29/Cys-113, Cys-41/Cys-126, and Cys-112/Cys-117. Low complexity predominate over residues 81–94; the sequence is ALDPDPALDPQLPH. A disordered region spans residues 81-101; it reads ALDPDPALDPQLPHQASQRQR.

This sequence belongs to the insulin family. As to quaternary structure, heterodimer of a B chain and an A chain linked by two disulfide bonds. In terms of tissue distribution, expressed in Leydig cells of the testis, and weakly in the theca interna cells of antral follicles and the corpus luteum of the ovary.

Its subcellular location is the secreted. Seems to play a role in testicular function. May be a trophic hormone with a role in testicular descent in fetal life. Is a ligand for LGR8 receptor. This is Insulin-like 3 (Insl3) from Rattus norvegicus (Rat).